Consider the following 129-residue polypeptide: MSTSSVRFAFRRFWQSETGPKTVHFWAPTLKWGLVFAGFSDMKRPVEKISGAQNLSLLSTALIWTRWSFVIKPRNILLASVNSFLCLTAGYQLGRIANYRIRNGDSISQLCSYILSGADESKKEITTGR.

At 2-22 (STSSVRFAFRRFWQSETGPKT) the chain is on the mitochondrial matrix side. A helical membrane pass occupies residues 23 to 39 (VHFWAPTLKWGLVFAGF). The Mitochondrial intermembrane segment spans residues 40-54 (SDMKRPVEKISGAQN). The helical transmembrane segment at 55–71 (LSLLSTALIWTRWSFVI) threads the bilayer. The Mitochondrial matrix segment spans residues 72–74 (KPR). The helical transmembrane segment at 75 to 91 (NILLASVNSFLCLTAGY) threads the bilayer. The Mitochondrial intermembrane segment spans residues 92 to 129 (QLGRIANYRIRNGDSISQLCSYILSGADESKKEITTGR).

This sequence belongs to the mitochondrial pyruvate carrier (MPC) (TC 2.A.105) family. In terms of assembly, the functional 150 kDa pyruvate import complex is a heteromer of MPC1 and either MPC2 or MPC3.

Its subcellular location is the mitochondrion. It localises to the mitochondrion inner membrane. It catalyses the reaction pyruvate(out) + H(+)(out) = pyruvate(in) + H(+)(in). In terms of biological role, mediates the uptake of pyruvate into mitochondria. In Saccharomyces cerevisiae (strain ATCC 204508 / S288c) (Baker's yeast), this protein is Mitochondrial pyruvate carrier 2.